A 1118-amino-acid polypeptide reads, in one-letter code: Cytospin-A (1118 aa).

The interval 1–176 (MKKASRSVGS…SKSKSDNQIS (176 aa)) is disordered. A compositionally biased stretch (polar residues) spans 29–52 (ESGSSLSAVTKLSKPGTSASLLKT). Residues 79-119 (STCASTVSSTTGTTMSTLENKPRTVAGSTARRSTSSGTKES) show a composition bias toward low complexity. 2 stretches are compositionally biased toward basic and acidic residues: residues 120–131 (SSSRERIRDRSR) and 158–171 (TNPE…KSKS). A coiled-coil region spans residues 193–281 (KTKDVEILHL…LNALGFSLEQ (89 aa)). 2 disordered regions span residues 299 to 324 (ITAG…GSME) and 359 to 391 (SSDD…NASE). The span at 359-373 (SSDDALDAPSSSESE) shows a compositional bias: low complexity. Coiled coils occupy residues 396–450 (CLTE…MESL) and 488–808 (RYME…RGRV). Disordered regions lie at residues 856–879 (PSPA…PPAA) and 921–1002 (TSST…RKDP). Positions 937–946 (ESAKSISVSR) are enriched in low complexity. Positions 947-957 (RSSEEIKRDIS) are enriched in basic and acidic residues. Positions 972–991 (TTSPQLSLSSSPTASVTPTT) are enriched in low complexity. The Calponin-homology (CH) domain occupies 1012 to 1117 (GSKRNALLKW…YVTAIYKYFE (106 aa)).

It belongs to the cytospin-A family. May interact with both microtubules and actin cytoskeleton.

It localises to the cytoplasm. The protein localises to the cytoskeleton. It is found in the spindle. Its subcellular location is the cell junction. The protein resides in the gap junction. In terms of biological role, involved in cytokinesis and spindle organization. May play a role in actin cytoskeleton organization and microtubule stabilization and hence required for proper cell adhesion and migration. The polypeptide is Cytospin-A (SPECC1L) (Gallus gallus (Chicken)).